The sequence spans 653 residues: Amyloid beta A4 precursor protein-binding family B member 1-interacting protein (653 aa).

The segment at 82-141 is disordered; the sequence is NNKSTAPFPPADASNSYHFHPPPMPSIITEDLSLLPPPPEFDPHYPPPPPDPLTEPKTQE. A compositionally biased stretch (pro residues) spans 116–134; that stretch reads LPPPPEFDPHYPPPPPDPL. The 89-residue stretch at 165–253 folds into the Ras-associating domain; it reads KKRIVKVHMI…IHFLEKNEKY (89 aa). The PH domain maps to 295-404; sequence VPELEAALYL…WVTGIRIAKY (110 aa). Basic and acidic residues predominate over residues 462-481; it reads KHGEANKQEKKSSEVNKPET. Positions 462–653 are disordered; the sequence is KHGEANKQEK…ALQKKREPPT (192 aa). A compositionally biased stretch (pro residues) spans 585–604; that stretch reads PAPPPPPPPPAPAANVPPLP. The span at 605–614 shows a compositional bias: basic residues; the sequence is VKKHPPKPPK.

This sequence belongs to the MRL family.

Its subcellular location is the cell membrane. The protein localises to the cytoplasm. It localises to the cytoskeleton. In terms of biological role, appears to function in the signal transduction from Ras activation to actin cytoskeletal remodeling. The sequence is that of Amyloid beta A4 precursor protein-binding family B member 1-interacting protein (apbb1ip) from Xenopus laevis (African clawed frog).